A 349-amino-acid chain; its full sequence is Quinolinate synthase (349 aa).

Residues histidine 52 and serine 69 each coordinate iminosuccinate. Cysteine 114 is a binding site for [4Fe-4S] cluster. Residues 140 to 142 (YVN) and serine 157 each bind iminosuccinate. Residue cysteine 201 coordinates [4Fe-4S] cluster. Iminosuccinate-binding positions include 227-229 (HPE) and threonine 255. Residue cysteine 300 participates in [4Fe-4S] cluster binding.

Belongs to the quinolinate synthase family. Type 2 subfamily. [4Fe-4S] cluster is required as a cofactor.

The protein resides in the cytoplasm. It catalyses the reaction iminosuccinate + dihydroxyacetone phosphate = quinolinate + phosphate + 2 H2O + H(+). It participates in cofactor biosynthesis; NAD(+) biosynthesis; quinolinate from iminoaspartate: step 1/1. Its function is as follows. Catalyzes the condensation of iminoaspartate with dihydroxyacetone phosphate to form quinolinate. This chain is Quinolinate synthase, found in Mycobacterium bovis (strain BCG / Tokyo 172 / ATCC 35737 / TMC 1019).